Here is a 103-residue protein sequence, read N- to C-terminus: Large ribosomal subunit protein uL24 (103 aa).

The protein belongs to the universal ribosomal protein uL24 family. Part of the 50S ribosomal subunit.

Its function is as follows. One of two assembly initiator proteins, it binds directly to the 5'-end of the 23S rRNA, where it nucleates assembly of the 50S subunit. In terms of biological role, one of the proteins that surrounds the polypeptide exit tunnel on the outside of the subunit. This chain is Large ribosomal subunit protein uL24, found in Bacillus mycoides (strain KBAB4) (Bacillus weihenstephanensis).